Here is a 333-residue protein sequence, read N- to C-terminus: Flap endonuclease 1 (333 aa).

The interval 1 to 99 (MGVAIRDILA…ETINERREHR (99 aa)) is N-domain. Mg(2+) contacts are provided by aspartate 28, aspartate 81, glutamate 153, glutamate 155, aspartate 174, aspartate 176, and aspartate 235. Residues 117–255 (EAYKQASASA…KTALKIVRNG (139 aa)) form an I-domain region. Residues 325–333 (TQKTLDAWF) are interaction with PCNA.

This sequence belongs to the XPG/RAD2 endonuclease family. FEN1 subfamily. As to quaternary structure, interacts with PCNA. PCNA stimulates the nuclease activity without altering cleavage specificity. Requires Mg(2+) as cofactor.

In terms of biological role, structure-specific nuclease with 5'-flap endonuclease and 5'-3' exonuclease activities involved in DNA replication and repair. During DNA replication, cleaves the 5'-overhanging flap structure that is generated by displacement synthesis when DNA polymerase encounters the 5'-end of a downstream Okazaki fragment. Binds the unpaired 3'-DNA end and kinks the DNA to facilitate 5' cleavage specificity. Cleaves one nucleotide into the double-stranded DNA from the junction in flap DNA, leaving a nick for ligation. Also involved in the base excision repair (BER) pathway. Acts as a genome stabilization factor that prevents flaps from equilibrating into structures that lead to duplications and deletions. Also possesses 5'-3' exonuclease activity on nicked or gapped double-stranded DNA. In Methanoculleus marisnigri (strain ATCC 35101 / DSM 1498 / JR1), this protein is Flap endonuclease 1.